Consider the following 176-residue polypeptide: MSELTTIARPYAKAAFDFAVEQSAVEKWHEMLAFIAEVAKDEQIQQFLTSSLSPEKVADTVISICGEHLDKSGQNLIRLMAENKRLTVLPAVFNEFRHYMEEYNAIAEVQVISAQPLNATQTDKIAAAMEKRLARKVKLNCSVDNTLIAGVIIRTDDFVIDGSSRGQLNRLANELQ.

This sequence belongs to the ATPase delta chain family. In terms of assembly, F-type ATPases have 2 components, F(1) - the catalytic core - and F(0) - the membrane proton channel. F(1) has five subunits: alpha(3), beta(3), gamma(1), delta(1), epsilon(1). F(0) has three main subunits: a(1), b(2) and c(10-14). The alpha and beta chains form an alternating ring which encloses part of the gamma chain. F(1) is attached to F(0) by a central stalk formed by the gamma and epsilon chains, while a peripheral stalk is formed by the delta and b chains.

The protein resides in the cell inner membrane. In terms of biological role, f(1)F(0) ATP synthase produces ATP from ADP in the presence of a proton or sodium gradient. F-type ATPases consist of two structural domains, F(1) containing the extramembraneous catalytic core and F(0) containing the membrane proton channel, linked together by a central stalk and a peripheral stalk. During catalysis, ATP synthesis in the catalytic domain of F(1) is coupled via a rotary mechanism of the central stalk subunits to proton translocation. Its function is as follows. This protein is part of the stalk that links CF(0) to CF(1). It either transmits conformational changes from CF(0) to CF(1) or is implicated in proton conduction. The sequence is that of ATP synthase subunit delta from Actinobacillus succinogenes (strain ATCC 55618 / DSM 22257 / CCUG 43843 / 130Z).